A 391-amino-acid chain; its full sequence is S-adenosylmethionine synthase (391 aa).

Residues 1 to 20 (MPRSDYLFTSESVSEGHPDK) form a disordered region. H17 contributes to the ATP binding site. D19 is a Mg(2+) binding site. A K(+)-binding site is contributed by E45. The L-methionine site is built by E58 and Q102. The interval 102–112 (QSADIAQGVDA) is flexible loop. ATP-binding positions include 169-171 (DAK), 235-236 (KF), D244, 250-251 (RK), A267, and K271. Position 244 (D244) interacts with L-methionine. K275 contacts L-methionine.

The protein belongs to the AdoMet synthase family. Homotetramer; dimer of dimers. Requires Mg(2+) as cofactor. It depends on K(+) as a cofactor.

Its subcellular location is the cytoplasm. It carries out the reaction L-methionine + ATP + H2O = S-adenosyl-L-methionine + phosphate + diphosphate. The protein operates within amino-acid biosynthesis; S-adenosyl-L-methionine biosynthesis; S-adenosyl-L-methionine from L-methionine: step 1/1. Functionally, catalyzes the formation of S-adenosylmethionine (AdoMet) from methionine and ATP. The overall synthetic reaction is composed of two sequential steps, AdoMet formation and the subsequent tripolyphosphate hydrolysis which occurs prior to release of AdoMet from the enzyme. This is S-adenosylmethionine synthase from Methylorubrum populi (strain ATCC BAA-705 / NCIMB 13946 / BJ001) (Methylobacterium populi).